The following is a 620-amino-acid chain: Protein CNGC15b (620 aa).

6 helical membrane-spanning segments follow: residues 73 to 93 (IFLV…YLPI), 102 to 122 (IGIA…VFYV), 161 to 181 (GFFL…WIVI), 198 to 218 (FIII…SSQI), 237 to 257 (LMLY…LSIE), and 356 to 376 (GEIM…ALLI). 462–559 (LFDAMDERML…SSTRTVKAIS (98 aa)) contributes to the a nucleoside 3',5'-cyclic phosphate binding site.

The protein belongs to the cyclic nucleotide-gated cation channel (TC 1.A.1.5) family. In terms of assembly, interacts (via N-terminus) with DMI1 (via c-terminus). The Nod factor has no effect on this interaction, implying that the complex is maintained after activation. In terms of tissue distribution, expressed in roots, stems, leaves, flowers and pods.

Its subcellular location is the nucleus membrane. Functionally, cyclic nucleotide-gated channel involved in the establishment of both rhizobial and mycorrhizal associations. Required for full activation of nuclear-localized Ca(2+) oscillations by Nod and Myc factors. Simultaneous activation of the K(+)-permeable channel DMI1 and the Ca(2+) channel CNGC15 can give rise to sustained Ca(2+) oscillations. May function during fertilization in both female and male gametophytic Ca(2+) signaling. This chain is Protein CNGC15b, found in Medicago truncatula (Barrel medic).